A 436-amino-acid polypeptide reads, in one-letter code: Acetyl-CoA decarbonylase/synthase complex subunit delta 1 (436 aa).

The protein belongs to the CdhD family. As to quaternary structure, heterodimer of delta and gamma chains. The ACDS complex is made up of alpha, epsilon, beta, gamma and delta chains with a probable stoichiometry of (alpha(2)epsilon(2))(4)-beta(8)-(gamma(1)delta(1))(8) (Potential).

The protein operates within one-carbon metabolism; methanogenesis from acetate. In terms of biological role, part of a complex that catalyzes the reversible cleavage of acetyl-CoA, allowing growth on acetate as sole source of carbon and energy. Probably maintains the overall quaternary structure of the ACDS complex. The sequence is that of Acetyl-CoA decarbonylase/synthase complex subunit delta 1 (cdhD1) from Methanosarcina thermophila.